The primary structure comprises 162 residues: Phosphopantetheine adenylyltransferase (162 aa).

Ser-9 lines the substrate pocket. ATP is bound by residues 9-10 (SF) and His-17. Residues Lys-41, Thr-73, and Arg-87 each contribute to the substrate site. Residues 88–90 (GLR), Glu-98, and 122–128 (NQNISSS) contribute to the ATP site.

The protein belongs to the bacterial CoaD family. Homohexamer. Requires Mg(2+) as cofactor.

Its subcellular location is the cytoplasm. It catalyses the reaction (R)-4'-phosphopantetheine + ATP + H(+) = 3'-dephospho-CoA + diphosphate. It functions in the pathway cofactor biosynthesis; coenzyme A biosynthesis; CoA from (R)-pantothenate: step 4/5. Its function is as follows. Reversibly transfers an adenylyl group from ATP to 4'-phosphopantetheine, yielding dephospho-CoA (dPCoA) and pyrophosphate. This chain is Phosphopantetheine adenylyltransferase, found in Leuconostoc mesenteroides subsp. mesenteroides (strain ATCC 8293 / DSM 20343 / BCRC 11652 / CCM 1803 / JCM 6124 / NCDO 523 / NBRC 100496 / NCIMB 8023 / NCTC 12954 / NRRL B-1118 / 37Y).